The sequence spans 92 residues: Elongation factor 1-beta (92 aa).

It belongs to the EF-1-beta/EF-1-delta family.

Functionally, promotes the exchange of GDP for GTP in EF-1-alpha/GDP, thus allowing the regeneration of EF-1-alpha/GTP that could then be used to form the ternary complex EF-1-alpha/GTP/AAtRNA. The sequence is that of Elongation factor 1-beta from Pyrobaculum arsenaticum (strain DSM 13514 / JCM 11321 / PZ6).